The chain runs to 433 residues: Hps1-dma1 cluster O-methyltransferase (433 aa).

Residues 36–55 form a disordered region; the sequence is NGHPERSLNSTDSVRLSDAP. S-adenosyl-L-methionine is bound at residue Asp-285. His-331 functions as the Proton acceptor in the catalytic mechanism.

It belongs to the class I-like SAM-binding methyltransferase superfamily. Cation-independent O-methyltransferase family. COMT subfamily.

It participates in secondary metabolite biosynthesis. In terms of biological role, O-methyltransferase; part of the hps1-dma1 gene cluster that probably mediates the biosynthesis a derivative of cyclopiazonic acid (CPA). The hybrid polyketide synthase-nonribosomal peptide synthetase (PKS-NRPS) nps1 might incorporates acetyl-CoA, malonyl-CoA, and tryptophan (Trp) and utilizes a C-terminal redox-incompetent reductase domain to make and release the tryptophan tetramic acid, cyclo-acetoacetyl-L-tryptophan (c-AATrp), as the first intermediate in the pathway. In addition, the cluster also includes the tryptophan dimethylallyltransferase dma1, the FAD-dependent oxidoreductase toxD, the cytochrome P450 monooxygenase cyp3.1 and the methyltransferase DOTSEDRAFT_139328; the latter 2 being not present in all CPA-producing fungi but involved in additional modifications that occur in biosynthesis the of a range of CPA and CPA-like products. Further studies are required to clarify whether the CPA-like hps1-dma1 cluster is functional or a non-functional relic reflecting evolution of D.septosporum. The polypeptide is Hps1-dma1 cluster O-methyltransferase (Dothistroma septosporum (strain NZE10 / CBS 128990) (Red band needle blight fungus)).